The following is a 106-amino-acid chain: Small ribosomal subunit protein uS10 (106 aa).

The protein belongs to the universal ribosomal protein uS10 family. As to quaternary structure, part of the 30S ribosomal subunit.

Its function is as follows. Involved in the binding of tRNA to the ribosomes. The polypeptide is Small ribosomal subunit protein uS10 (Synechococcus sp. (strain WH7803)).